The primary structure comprises 359 residues: tRNA-specific 2-thiouridylase MnmA (359 aa).

Residues 6-13 (AMSGGVDS) and L32 each bind ATP. The active-site Nucleophile is the C97. An intrachain disulfide couples C97 to C195. Residue G121 coordinates ATP. The interaction with tRNA stretch occupies residues 144 to 146 (KDQ). Residue C195 is the Cysteine persulfide intermediate of the active site.

It belongs to the MnmA/TRMU family.

The protein localises to the cytoplasm. The catalysed reaction is S-sulfanyl-L-cysteinyl-[protein] + uridine(34) in tRNA + AH2 + ATP = 2-thiouridine(34) in tRNA + L-cysteinyl-[protein] + A + AMP + diphosphate + H(+). In terms of biological role, catalyzes the 2-thiolation of uridine at the wobble position (U34) of tRNA, leading to the formation of s(2)U34. This chain is tRNA-specific 2-thiouridylase MnmA, found in Tropheryma whipplei (strain TW08/27) (Whipple's bacillus).